The primary structure comprises 103 residues: Small ribosomal subunit protein uS10 (103 aa).

Belongs to the universal ribosomal protein uS10 family. Part of the 30S ribosomal subunit.

Its function is as follows. Involved in the binding of tRNA to the ribosomes. This chain is Small ribosomal subunit protein uS10, found in Actinobacillus pleuropneumoniae serotype 5b (strain L20).